The following is a 69-amino-acid chain: MARVTVEDCLEKVDNRFLLVMLASKRVKQLYKGASPLIDNKAANKNVVVSLREIASGKVGYELTSRKAK.

Belongs to the RNA polymerase subunit omega family. The RNAP catalytic core consists of 2 alpha, 1 beta, 1 beta' and 1 omega subunit. When a sigma factor is associated with the core the holoenzyme is formed, which can initiate transcription.

The catalysed reaction is RNA(n) + a ribonucleoside 5'-triphosphate = RNA(n+1) + diphosphate. In terms of biological role, promotes RNA polymerase assembly. Latches the N- and C-terminal regions of the beta' subunit thereby facilitating its interaction with the beta and alpha subunits. This Geobacter metallireducens (strain ATCC 53774 / DSM 7210 / GS-15) protein is DNA-directed RNA polymerase subunit omega.